Consider the following 160-residue polypeptide: 6,7-dimethyl-8-ribityllumazine synthase (160 aa).

5-amino-6-(D-ribitylamino)uracil contacts are provided by residues phenylalanine 22, 57 to 59 (TYE), and 81 to 83 (TII). 86 to 87 (QT) provides a ligand contact to (2S)-2-hydroxy-3-oxobutyl phosphate. Histidine 89 acts as the Proton donor in catalysis. Leucine 114 contacts 5-amino-6-(D-ribitylamino)uracil. Position 128 (arginine 128) interacts with (2S)-2-hydroxy-3-oxobutyl phosphate.

It belongs to the DMRL synthase family. Forms an icosahedral capsid composed of 60 subunits, arranged as a dodecamer of pentamers.

The catalysed reaction is (2S)-2-hydroxy-3-oxobutyl phosphate + 5-amino-6-(D-ribitylamino)uracil = 6,7-dimethyl-8-(1-D-ribityl)lumazine + phosphate + 2 H2O + H(+). The protein operates within cofactor biosynthesis; riboflavin biosynthesis; riboflavin from 2-hydroxy-3-oxobutyl phosphate and 5-amino-6-(D-ribitylamino)uracil: step 1/2. Catalyzes the formation of 6,7-dimethyl-8-ribityllumazine by condensation of 5-amino-6-(D-ribitylamino)uracil with 3,4-dihydroxy-2-butanone 4-phosphate. This is the penultimate step in the biosynthesis of riboflavin. This chain is 6,7-dimethyl-8-ribityllumazine synthase, found in Buchnera aphidicola subsp. Acyrthosiphon pisum (strain APS) (Acyrthosiphon pisum symbiotic bacterium).